Consider the following 397-residue polypeptide: Chorismate synthase (397 aa).

NADP(+)-binding residues include Arg40 and Arg46. Residues 129–131 (RAS), 257–258 (QA), Gly302, 317–321 (KPIAT), and Arg343 each bind FMN.

The protein belongs to the chorismate synthase family. Homotetramer. FMNH2 serves as cofactor.

It catalyses the reaction 5-O-(1-carboxyvinyl)-3-phosphoshikimate = chorismate + phosphate. Its pathway is metabolic intermediate biosynthesis; chorismate biosynthesis; chorismate from D-erythrose 4-phosphate and phosphoenolpyruvate: step 7/7. Catalyzes the anti-1,4-elimination of the C-3 phosphate and the C-6 proR hydrogen from 5-enolpyruvylshikimate-3-phosphate (EPSP) to yield chorismate, which is the branch point compound that serves as the starting substrate for the three terminal pathways of aromatic amino acid biosynthesis. This reaction introduces a second double bond into the aromatic ring system. The sequence is that of Chorismate synthase from Prosthecochloris aestuarii (strain DSM 271 / SK 413).